The chain runs to 230 residues: UPF0173 metal-dependent hydrolase SPO2976 (230 aa).

It belongs to the UPF0173 family.

The sequence is that of UPF0173 metal-dependent hydrolase SPO2976 from Ruegeria pomeroyi (strain ATCC 700808 / DSM 15171 / DSS-3) (Silicibacter pomeroyi).